The chain runs to 156 residues: MSESSTFTTAVVPEGEGVAPMAETVQYYNSYSDASIASCAFVDSGKDKIDKTKLVTYTSRLAASPAYQKVVGVGLKTAAGSIVPYVRLDMDNTGKGIHFNATKLSDSSAKLAAVLKTTVSMTEAQRTQLYMEYIKGIENRSAQFIWDWWRTGKAPA.

The N-terminal stretch at 1–21 is a signal peptide; the sequence is MSESSTFTTAVVPEGEGVAPM. The active site involves His98. Asn100 and Asn139 each carry an N-linked (GlcNAc...) asparagine glycan.

Belongs to the ribotoxin-like family. As to quaternary structure, monomer. Mg(2+) serves as cofactor.

The protein resides in the vacuole lumen. The enzyme catalyses a 28S rRNA containing guanosine-adenosine pair + H2O = an [RNA fragment]-3'-adenosine-3'-phosphate + a 5'-a hydroxy-guanosine-3'-[RNA fragment].. Its activity is regulated as follows. In contrast to most ribotoxins, activity is completely inhibited by EDTA. Its function is as follows. Fungal ribonuclease involved in fungal defense. Highly specific and highly toxic fungal endonuclease that cleaves a single phosphodiester bond in the 28S RNA of eukaryotic ribosomes at a universally conserved GAGA tetraloop of the sarcin-ricin loop (SRL). The damage of the SRL inhibits the binding of translation elongation factors and halts protein biosynthesis, ultimately resulting in the death of the target cells. Shows antitumor activity. Exerts cytotoxicity and induces apoptosis towards rat glial cells and human glioma cells, and also displays some activity towards human neurolastoma cell lines. Shows a strong entomotoxicity against Aedes aegypti larvae, yet no nematotoxicity against nematodes. This Cyclocybe aegerita (Black poplar mushroom) protein is Ribonuclease ageritin.